Reading from the N-terminus, the 768-residue chain is MRTVFSQIPRFKQVNQYIRMSTRQSDISNFFISSASHKSEHVEVSQSSSDSKNVDGRSTSEKRKVESVKLVDESKHNNHDDTGTQNVERENNIVSEAKKQKTLGSSSSSSDAVSSNNDSGASTPIPLPIKEPPLESNARNDKLKGHATFAEMVKAFTKIENTSKRLEIIDIMGTYFFGILRDHPSDLLACVYLSINKLGPDYSGLELGIGESIIMKAIGESTGQTLQQIKLSFHKVGDLGLVAQTSRQNQPTMFKPAALTIPFLFDSLKKIAQMSGNQSQNRKIGVIKRLLSSCEGAEPKYLIRALEGKLRLQLAEKTILVALANATAQYHADKNGEKLSQQDRIEGEQILRDVYCQLPSYDLIVPHLIEHGLGTLRETCKLTPGIPTKPMLAKPTKQISEVLNTFDQAAFTCEYKYDGERAQVHFTEDGKFYVFSRNSENMSVRYPDISVSVSKWKKPDARSFILDCEAVGWDRDENKILPFQKLATRKRKDVKIGDIKVRACLFAFDILYLNGQPLLETPLNERRKLLYSMFQPSTGDFTFAKHSDQKSIESIEEFLEESVKDSCEGLMVKMLEGPDSHYEPSKRSRHWLKVKKDYLSGVGDSLDLIVIGAYYGKGKRTSVYGAFLLGCYDPDTETVQSICKLGTGFSEEHLETFYNQLKDIVISKKKDFYAHSDVPAHQPDVWFEPKYLWEVLAADLSLSPVYKAAIGYVQEDKGISLRFPRFIRIREDKSWEDATTSEQVSEFYRSQVAYSQKEKEGSPAAEDY.

The interval valine 42–arginine 139 is disordered. Residues lysine 52 to lysine 99 are compositionally biased toward basic and acidic residues. Low complexity predominate over residues glycine 104–proline 124. An interaction with target DNA region spans residues lysine 309 to threonine 318. Glutamate 414 provides a ligand contact to ATP. Lysine 416 functions as the N6-AMP-lysine intermediate in the catalytic mechanism. 2 residues coordinate ATP: arginine 421 and arginine 437. Residue glutamate 469 coordinates Mg(2+). An interaction with target DNA region spans residues lysine 490–lysine 492. Glutamate 568 serves as a coordination point for Mg(2+). ATP-binding residues include lysine 573, arginine 587, and lysine 593.

Belongs to the ATP-dependent DNA ligase family. It depends on Mg(2+) as a cofactor.

It localises to the nucleus. The catalysed reaction is ATP + (deoxyribonucleotide)n-3'-hydroxyl + 5'-phospho-(deoxyribonucleotide)m = (deoxyribonucleotide)n+m + AMP + diphosphate.. Its function is as follows. DNA ligase that seals nicks in double-stranded DNA during DNA replication, DNA recombination and DNA repair. The polypeptide is DNA ligase 1 (cdc17) (Schizosaccharomyces pombe (strain 972 / ATCC 24843) (Fission yeast)).